A 160-amino-acid polypeptide reads, in one-letter code: SsrA-binding protein (160 aa).

A disordered region spans residues 136–160 (KRDTVRERDSNRELQRAVRNKGKED).

This sequence belongs to the SmpB family.

The protein localises to the cytoplasm. Its function is as follows. Required for rescue of stalled ribosomes mediated by trans-translation. Binds to transfer-messenger RNA (tmRNA), required for stable association of tmRNA with ribosomes. tmRNA and SmpB together mimic tRNA shape, replacing the anticodon stem-loop with SmpB. tmRNA is encoded by the ssrA gene; the 2 termini fold to resemble tRNA(Ala) and it encodes a 'tag peptide', a short internal open reading frame. During trans-translation Ala-aminoacylated tmRNA acts like a tRNA, entering the A-site of stalled ribosomes, displacing the stalled mRNA. The ribosome then switches to translate the ORF on the tmRNA; the nascent peptide is terminated with the 'tag peptide' encoded by the tmRNA and targeted for degradation. The ribosome is freed to recommence translation, which seems to be the essential function of trans-translation. In Pseudomonas putida (strain W619), this protein is SsrA-binding protein.